A 210-amino-acid chain; its full sequence is ATP-dependent Clp protease proteolytic subunit 1 (210 aa).

S106 functions as the Nucleophile in the catalytic mechanism. Residue H131 is part of the active site.

It belongs to the peptidase S14 family. As to quaternary structure, fourteen ClpP subunits assemble into 2 heptameric rings which stack back to back to give a disk-like structure with a central cavity, resembling the structure of eukaryotic proteasomes.

The protein resides in the cytoplasm. The catalysed reaction is Hydrolysis of proteins to small peptides in the presence of ATP and magnesium. alpha-casein is the usual test substrate. In the absence of ATP, only oligopeptides shorter than five residues are hydrolyzed (such as succinyl-Leu-Tyr-|-NHMec, and Leu-Tyr-Leu-|-Tyr-Trp, in which cleavage of the -Tyr-|-Leu- and -Tyr-|-Trp bonds also occurs).. Functionally, cleaves peptides in various proteins in a process that requires ATP hydrolysis. Has a chymotrypsin-like activity. Plays a major role in the degradation of misfolded proteins. This is ATP-dependent Clp protease proteolytic subunit 1 from Chelativorans sp. (strain BNC1).